A 147-amino-acid chain; its full sequence is Small ribosomal subunit protein uS5 (147 aa).

In terms of domain architecture, S5 DRBM spans 9–72 (FQEVVVNIGR…DDAFKNLIHV (64 aa)).

It belongs to the universal ribosomal protein uS5 family. As to quaternary structure, part of the 30S ribosomal subunit. Contacts proteins S4 and S8.

With S4 and S12 plays an important role in translational accuracy. Its function is as follows. Located at the back of the 30S subunit body where it stabilizes the conformation of the head with respect to the body. The polypeptide is Small ribosomal subunit protein uS5 (Helicobacter pylori (strain J99 / ATCC 700824) (Campylobacter pylori J99)).